Consider the following 615-residue polypeptide: 1-deoxy-D-xylulose-5-phosphate synthase (615 aa).

Thiamine diphosphate-binding positions include histidine 76 and 117-119 (GHS). Aspartate 148 serves as a coordination point for Mg(2+). Residues 149–150 (GA), asparagine 177, tyrosine 284, and glutamate 365 contribute to the thiamine diphosphate site. Asparagine 177 contacts Mg(2+).

This sequence belongs to the transketolase family. DXPS subfamily. In terms of assembly, homodimer. It depends on Mg(2+) as a cofactor. Requires thiamine diphosphate as cofactor.

The catalysed reaction is D-glyceraldehyde 3-phosphate + pyruvate + H(+) = 1-deoxy-D-xylulose 5-phosphate + CO2. Its pathway is metabolic intermediate biosynthesis; 1-deoxy-D-xylulose 5-phosphate biosynthesis; 1-deoxy-D-xylulose 5-phosphate from D-glyceraldehyde 3-phosphate and pyruvate: step 1/1. In terms of biological role, catalyzes the acyloin condensation reaction between C atoms 2 and 3 of pyruvate and glyceraldehyde 3-phosphate to yield 1-deoxy-D-xylulose-5-phosphate (DXP). The sequence is that of 1-deoxy-D-xylulose-5-phosphate synthase from Francisella tularensis subsp. holarctica (strain FTNF002-00 / FTA).